A 457-amino-acid chain; its full sequence is Na(+)/H(+) antiporter NhaA (457 aa).

11 consecutive transmembrane segments (helical) span residues 33–53 (ASGI…NSPL), 76–96 (FSLA…VVGM), 114–134 (LLPL…FLAF), 142–162 (AGWG…LTLL), 172–192 (VFVT…IALF), 196–216 (GLQL…ALMS), 235–255 (YALH…GLAI), 308–328 (FVHA…ALAN), 349–369 (TALA…WIAV), 385–405 (LIGV…IAGL), and 419–439 (VGIL…LRLT).

It belongs to the NhaA Na(+)/H(+) (TC 2.A.33) antiporter family.

The protein resides in the cell inner membrane. The enzyme catalyses Na(+)(in) + 2 H(+)(out) = Na(+)(out) + 2 H(+)(in). Na(+)/H(+) antiporter that extrudes sodium in exchange for external protons. The protein is Na(+)/H(+) antiporter NhaA of Anaeromyxobacter sp. (strain Fw109-5).